Consider the following 96-residue polypeptide: ATP synthase subunit c (96 aa).

Helical transmembrane passes span 26-46 (GLVLFGAAIGMAIAAAGCGIG) and 68-88 (IMVTLILGLAFVESLAIYALV).

It belongs to the ATPase C chain family. F-type ATPases have 2 components, F(1) - the catalytic core - and F(0) - the membrane proton channel. F(1) has five subunits: alpha(3), beta(3), gamma(1), delta(1), epsilon(1). F(0) has three main subunits: a(1), b(2) and c(10-14). The alpha and beta chains form an alternating ring which encloses part of the gamma chain. F(1) is attached to F(0) by a central stalk formed by the gamma and epsilon chains, while a peripheral stalk is formed by the delta and b chains.

Its subcellular location is the cell inner membrane. Its function is as follows. F(1)F(0) ATP synthase produces ATP from ADP in the presence of a proton or sodium gradient. F-type ATPases consist of two structural domains, F(1) containing the extramembraneous catalytic core and F(0) containing the membrane proton channel, linked together by a central stalk and a peripheral stalk. During catalysis, ATP synthesis in the catalytic domain of F(1) is coupled via a rotary mechanism of the central stalk subunits to proton translocation. Functionally, key component of the F(0) channel; it plays a direct role in translocation across the membrane. A homomeric c-ring of between 10-14 subunits forms the central stalk rotor element with the F(1) delta and epsilon subunits. This is ATP synthase subunit c from Oleidesulfovibrio alaskensis (strain ATCC BAA-1058 / DSM 17464 / G20) (Desulfovibrio alaskensis).